Consider the following 318-residue polypeptide: Bis(5'-nucleosyl)-tetraphosphatase, symmetrical (318 aa).

The disordered stretch occupies residues 269–318; it reads PGREVTGPAPVARAPRRPRERLGRQRSRGNRGNAGNTAVPAKPPVDTPQD. Positions 282–297 are enriched in basic residues; sequence APRRPRERLGRQRSRG. Over residues 309-318 the composition is skewed to pro residues; sequence AKPPVDTPQD.

The protein belongs to the Ap4A hydrolase family.

The catalysed reaction is P(1),P(4)-bis(5'-adenosyl) tetraphosphate + H2O = 2 ADP + 2 H(+). Its function is as follows. Hydrolyzes diadenosine 5',5'''-P1,P4-tetraphosphate to yield ADP. This chain is Bis(5'-nucleosyl)-tetraphosphatase, symmetrical, found in Xanthomonas oryzae pv. oryzae (strain MAFF 311018).